The primary structure comprises 478 residues: Zinc finger protein 410 (478 aa).

Disordered regions lie at residues 84–113 and 187–214; these read PDGEETRAQTVQKSPEFLTTPESPSLLQDL and NAKTGSNGENVHLGSGDGQPKDSGPLPQ. The span at 103 to 113 shows a compositional bias: polar residues; that stretch reads TPESPSLLQDL. 5 consecutive C2H2-type zinc fingers follow at residues 219 to 243, 249 to 273, 279 to 303, 309 to 333, and 339 to 362; these read LKCTVEGCDRTFVWPAHFKYHLKTH, FICPAEGCGKSFYVLQRLKVHMRTH, FMCHESGCGKQFTTAGNLKNHRRIH, FLCEAQGCGRSFAEYSSLRKHLVVH, and HQCQVCGKTFSQSGSRNVHMRKHH. Zn(2+)-binding residues include Cys221, Cys226, His239, His243, Cys251, Cys256, His269, His273, Cys281, Cys286, His299, His303, Cys311, Cys316, His329, His333, Cys341, Cys344, His357, and His361.

As to quaternary structure, interacts with CDKN2A/p14ARF. O-glycosylated. O-GlcNAcylation may occur in response to increasing glucose levels and affect transcription factor activity. In terms of processing, sumoylated. Sumoylation increases its half-life, possibly by blocking ubiquitin-mediated degradation.

It localises to the nucleus. The protein localises to the chromosome. In terms of biological role, transcription factor that binds to the sequence motif 5'-CATCCCATAATA-3', and is specifically required to silence expression of fetal hemoglobin in adult erythroid cells. Prevents expression of fetal hemoglobin genes HBG1 and HBG2 through CHD4: acts as a direct transcriptional activator of CHD4, a central component of the NuRD complex that represses transcription of fetal hemoglobin genes HBG1 and HBG2 in erythroid cells. May also activate transcription of matrix-remodeling genes such as MMP1 during fibroblast senescence. May activate transcription of the gap junction gene GJC1, perhaps in response to increasing glucose. However, recent studies suggest that ZNF410 is dedicated to regulate expression of a single gene: CHD4. This is Zinc finger protein 410 from Mus musculus (Mouse).